Reading from the N-terminus, the 425-residue chain is Palmitoyltransferase ZDHHC23 (425 aa).

Topologically, residues 1-81 (MKPVKKKKTE…RIPWLRGAKK (81 aa)) are cytoplasmic. Residues 82–99 (VNISIVPPLVLLPVFLHV) form a helical membrane-spanning segment. At 100 to 102 (ASW) the chain is on the lumenal side. A helical transmembrane segment spans residues 103 to 125 (HFLLGVVVLTSLPMLALWYYYLT). At 126–130 (HRRKE) the chain is on the cytoplasmic side. Residues 131-151 (QTLFFLSLGLFSLGYMYYVFL) form a helical membrane-spanning segment. Residues 152-159 (REVVPQGR) lie on the Lumenal side of the membrane. A helical membrane pass occupies residues 160 to 180 (VGPTQLALLTCGLLLILLALY). Topologically, residues 181–292 (RAKKNPGYLS…NSCVGESNHQ (112 aa)) are cytoplasmic. The DHHC domain maps to 249–299 (DWCAKCQLVRPARAWHCRICGICVRRMDHHCVWINSCVGESNHQAFILALS). Cys279 functions as the S-palmitoyl cysteine intermediate in the catalytic mechanism. The helical transmembrane segment at 293–313 (AFILALSIFLLTSVYGISLTL) threads the bilayer. At 314-343 (NTICRDRSLFTALFYCPGVYANYSSALSFT) the chain is on the lumenal side. A helical membrane pass occupies residues 344-364 (CVWYSVIITAGMAYIFLIQLI). Over 365–425 (NISYNVTERE…TVHTPAEDIV (61 aa)) the chain is Cytoplasmic. An interaction with NOS1 region spans residues 422 to 425 (EDIV).

Belongs to the DHHC palmitoyltransferase family. Interacts with NOS1. Expressed in the brain.

The protein resides in the golgi apparatus membrane. The protein localises to the golgi apparatus. It is found in the trans-Golgi network membrane. It carries out the reaction L-cysteinyl-[protein] + hexadecanoyl-CoA = S-hexadecanoyl-L-cysteinyl-[protein] + CoA. Functionally, palmitoyltransferase that could catalyze the addition of palmitate onto various protein substrates and be involved in a variety of cellular processes. Palmitoyltransferase that mediates palmitoylation of KCNMA1, regulating localization of KCNMA1 to the plasma membrane. May be involved in NOS1 regulation and targeting to the synaptic membrane. The sequence is that of Palmitoyltransferase ZDHHC23 from Mus musculus (Mouse).